The following is a 410-amino-acid chain: D-3-phosphoglycerate dehydrogenase (410 aa).

NAD(+)-binding positions include H161–I162, D181, A238–R240, and D264. R240 is a catalytic residue. Residue E269 is part of the active site. Catalysis depends on H292, which acts as the Proton donor. Residue H292 to G295 participates in NAD(+) binding. The 72-residue stretch at R339–Y410 folds into the ACT domain.

It belongs to the D-isomer specific 2-hydroxyacid dehydrogenase family. In terms of assembly, homotetramer.

It carries out the reaction (2R)-3-phosphoglycerate + NAD(+) = 3-phosphooxypyruvate + NADH + H(+). It catalyses the reaction (R)-2-hydroxyglutarate + NAD(+) = 2-oxoglutarate + NADH + H(+). Its pathway is amino-acid biosynthesis; L-serine biosynthesis; L-serine from 3-phospho-D-glycerate: step 1/3. In bacteria displays feedback inhibition by L-serine. In terms of biological role, catalyzes the reversible oxidation of 3-phospho-D-glycerate to 3-phosphonooxypyruvate, the first step of the phosphorylated L-serine biosynthesis pathway. Also catalyzes the reversible oxidation of 2-hydroxyglutarate to 2-oxoglutarate. This Escherichia coli O6:H1 (strain CFT073 / ATCC 700928 / UPEC) protein is D-3-phosphoglycerate dehydrogenase (serA).